Reading from the N-terminus, the 232-residue chain is MPDTTGGHPAALKVVTLDGPAGVGKTTLARRVADALGIPYLDTGAMFRTMAWRLGPDGPDLDEALLRDRLAGFVFTLRGRGGASVLSCNGEDIGNEIRTEEVGAMASRIAALPVVRECLKAAQQRMGAAQPLVVEGRDMGTVVFPGARHKFFLDAAPEIRAMRRYTQLQTMGEAHDLALLTEQIRSRDEQDRNRAVAPLRPAADAIIVDTGDLDIDGVFGVIMQHIRSRDGL.

ATP is bound at residue 19 to 27 (GPAGVGKTT).

The protein belongs to the cytidylate kinase family. Type 1 subfamily.

The protein localises to the cytoplasm. The enzyme catalyses CMP + ATP = CDP + ADP. The catalysed reaction is dCMP + ATP = dCDP + ADP. This is Cytidylate kinase from Nitratidesulfovibrio vulgaris (strain ATCC 29579 / DSM 644 / CCUG 34227 / NCIMB 8303 / VKM B-1760 / Hildenborough) (Desulfovibrio vulgaris).